Reading from the N-terminus, the 368-residue chain is MERTMSDAKLQRVLSSLTEVYRQLNSLPSSQPSDAGYVKLDTNENPFALPKAVMQSAVAALERQYLYPEDDNISLREAAAASYDLSADQVIAGNGSSELLSLIYKAFLGPGDSVAMLSPGFAYNRKLAQLQGARLLEIKWGESSLLPIHELLFGPAKQAKFILLANPNNPTGTFVPIADIESLVALSDQLVVLDEAYVDFAPDSALRLVNRYSNLLLLRTFSKSYAAAGIRVGFGFGHPEVIGRLRNIQNMFNMNVIGHAVGVSILAHRATYNENHRHIRHERERVRVALSRLGFSVTPSHANFLLARVPAGRDGVWWHACLKRKKILVAVLPDEGLEDCIRVSIGTKPQMDAFLAAVEDISGAQQSR.

Lysine 223 bears the N6-(pyridoxal phosphate)lysine mark.

The protein belongs to the class-II pyridoxal-phosphate-dependent aminotransferase family. Histidinol-phosphate aminotransferase subfamily. Homodimer. The cofactor is pyridoxal 5'-phosphate.

It carries out the reaction L-histidinol phosphate + 2-oxoglutarate = 3-(imidazol-4-yl)-2-oxopropyl phosphate + L-glutamate. The protein operates within amino-acid biosynthesis; L-histidine biosynthesis; L-histidine from 5-phospho-alpha-D-ribose 1-diphosphate: step 7/9. The protein is Histidinol-phosphate aminotransferase (hisC) of Sinorhizobium fredii (strain NBRC 101917 / NGR234).